Consider the following 327-residue polypeptide: G protein pathway suppressor 2 (327 aa).

A coiled-coil region spans residues 14–109; that stretch reads MARALHRHIM…RRRKEQSDLT (96 aa). The tract at residues 26 to 65 is disordered; it reads RERKRQEEEEVDKMMEQKMKEEQERRKKKEMEERMSLEET. Residues Lys45 and Lys71 each participate in a glycyl lysine isopeptide (Lys-Gly) (interchain with G-Cter in SUMO1) cross-link. Positions 61 to 94 are interaction with SUMO; the sequence is SLEETKEQILKLEEKLLALQEEKHQLFLQLKKVL. 2 disordered regions span residues 177 to 208 and 253 to 327; these read HGQF…SPSQ and QKQM…FYHK. The span at 253–271 shows a compositional bias: polar residues; that stretch reads QKQMEHANQQTGFSDSSSL. The residue at position 312 (Arg312) is an Asymmetric dimethylarginine. Residues 317–327 are compositionally biased toward polar residues; sequence QHSQNPRFYHK. Arg323 carries the post-translational modification Asymmetric dimethylarginine; alternate. The residue at position 323 (Arg323) is an Omega-N-methylarginine; alternate.

In terms of assembly, component of the N-Cor repressor complex, at least composed of NCOR1, NCOR2, HDAC3, TBL1X, TBL1R, CORO2A and GPS2. Interacts (when sumoylated at Lys-71) with TBL1X; leading to protect GPS2 from degradation by the proteasome. Interacts with UBE2N; leading to inhibit UBE2N/Ubc13 activity. Interacts with TRAF1. Interacts with TRAF2. Interacts with TRAF6. Interacts with PPARG (when in the liganded conformation). Interacts with (sumoylated) NR1H2; interaction with sumoylated NR1H2 and NR5A2 onto hepatic acute phase protein promoters prevents N-Cor corepressor complex dissociation. Interacts with (sumoylated) NR5A2; interaction with sumoylated NR1H2 and NR5A2 onto hepatic acute phase protein promoters prevents N-Cor corepressor complex dissociation. Interacts with NR1H3. Interacts with RFX4. Interacts with ANKRD26. As to quaternary structure, (Microbial infection) Interacts (via coiled coil domain) with hepatitis C virus (HCV) NS5A. Sumoylation regulates its subcellular location. Sumoylation at Lys-45 and Lys-71 regulates the shuttling between the cytoplasm and the nucleus. Sumoylation at Lys-71 is required for interaction with TBL1X. Sumoylated at Lys-45 and Lys-71 in mitochondrion. Desumoylation by SENP1 leads to relocation from the mitochondria to the nucleus. In terms of processing, ubiquitinated at the C-terminus by SIAH2; leading to its degradation by the proteasome. Interaction with TBL1X and methylation at Arg-323 protect GPS2 against ubiquitination and degradation. Post-translationally, methylated at Arg-312 and Arg-323 by PRMT6. Methylation at Arg-323 protects from degradation by the proteasome. In terms of tissue distribution, widely expressed.

It localises to the nucleus. It is found in the mitochondrion. Its subcellular location is the cytoplasm. The protein resides in the cytosol. In terms of biological role, key regulator of inflammation, lipid metabolism and mitochondrion homeostasis that acts by inhibiting the activity of the ubiquitin-conjugating enzyme UBE2N/Ubc13, thereby inhibiting 'Lys-63'-linked ubiquitination. In the nucleus, can both acts as a corepressor and coactivator of transcription, depending on the context. Acts as a transcription coactivator in adipocytes by promoting the recruitment of PPARG to promoters: acts by inhibiting the activity of the ubiquitin-conjugating enzyme UBE2N/Ubc13, leading to stabilization of KDM4A and subsequent histone H3 'Lys-9' (H3K9) demethylation. Promotes cholesterol efflux by acting as a transcription coactivator. Acts as a regulator of B-cell development by inhibiting UBE2N/Ubc13, thereby restricting the activation of Toll-like receptors (TLRs) and B-cell antigen receptors (BCRs) signaling pathways. Acts as a key mediator of mitochondrial stress response: in response to mitochondrial depolarization, relocates from the mitochondria to the nucleus following desumoylation and specifically promotes expression of nuclear-encoded mitochondrial genes. Promotes transcription of nuclear-encoded mitochondrial genes by inhibiting UBE2N/Ubc13. Can also act as a corepressor as part of the N-Cor repressor complex by repressing active PPARG. Plays an anti-inflammatory role in macrophages and is required for insulin sensitivity by acting as a corepressor. Plays an anti-inflammatory role during the hepatic acute phase response by interacting with sumoylated NR1H2 and NR5A2 proteins, thereby preventing N-Cor corepressor complex dissociation. In the cytosol, also plays a non-transcriptional role by regulating insulin signaling and pro-inflammatory pathways. In the cytoplasm, acts as a negative regulator of inflammation by inhibiting the pro-inflammatory TNF-alpha pathway; acts by repressing UBE2N/Ubc13 activity. In the cytoplasm of adipocytes, restricts the activation of insulin signaling via inhibition of UBE2N/Ubc13-mediated ubiquitination of AKT. Able to suppress G-protein- and mitogen-activated protein kinase-mediated signal transduction. Acts as a tumor-suppressor in liposarcoma. Functionally, (Microbial infection) Required for efficient replication of hepatitis C virus (HCV) by promoting the interaction between VAPA and HCV virus protein NS5A. The sequence is that of G protein pathway suppressor 2 from Homo sapiens (Human).